The sequence spans 436 residues: Histidine--tRNA ligase (436 aa).

Belongs to the class-II aminoacyl-tRNA synthetase family. As to quaternary structure, homodimer.

Its subcellular location is the cytoplasm. The enzyme catalyses tRNA(His) + L-histidine + ATP = L-histidyl-tRNA(His) + AMP + diphosphate + H(+). This chain is Histidine--tRNA ligase, found in Prochlorococcus marinus (strain MIT 9303).